A 545-amino-acid polypeptide reads, in one-letter code: CTP synthase (545 aa).

The tract at residues 1–266 (MTTRYIFVTG…DDLVVKRFGL (266 aa)) is amidoligase domain. Ser14 is a binding site for CTP. Ser14 contacts UTP. ATP is bound by residues 15 to 20 (SLGKGI) and Asp72. The Mg(2+) site is built by Asp72 and Glu140. Residues 147–149 (DIE), 187–192 (KTKPTQ), and Lys223 contribute to the CTP site. UTP-binding positions include 187–192 (KTKPTQ) and Lys223. 239 to 241 (KDV) serves as a coordination point for ATP. The region spanning 291-542 (VIGMVGKYIE…IAAASAHQKR (252 aa)) is the Glutamine amidotransferase type-1 domain. Gly352 contacts L-glutamine. Catalysis depends on Cys379, which acts as the Nucleophile; for glutamine hydrolysis. L-glutamine contacts are provided by residues 380–383 (LGMQ), Glu403, and Arg470. Active-site residues include His515 and Glu517.

The protein belongs to the CTP synthase family. As to quaternary structure, homotetramer.

It catalyses the reaction UTP + L-glutamine + ATP + H2O = CTP + L-glutamate + ADP + phosphate + 2 H(+). The enzyme catalyses L-glutamine + H2O = L-glutamate + NH4(+). The catalysed reaction is UTP + NH4(+) + ATP = CTP + ADP + phosphate + 2 H(+). Its pathway is pyrimidine metabolism; CTP biosynthesis via de novo pathway; CTP from UDP: step 2/2. Allosterically activated by GTP, when glutamine is the substrate; GTP has no effect on the reaction when ammonia is the substrate. The allosteric effector GTP functions by stabilizing the protein conformation that binds the tetrahedral intermediate(s) formed during glutamine hydrolysis. Inhibited by the product CTP, via allosteric rather than competitive inhibition. In terms of biological role, catalyzes the ATP-dependent amination of UTP to CTP with either L-glutamine or ammonia as the source of nitrogen. Regulates intracellular CTP levels through interactions with the four ribonucleotide triphosphates. This is CTP synthase from Shewanella putrefaciens (strain CN-32 / ATCC BAA-453).